The following is a 56-amino-acid chain: Large ribosomal subunit protein bL33A (56 aa).

It belongs to the bacterial ribosomal protein bL33 family.

This is Large ribosomal subunit protein bL33A from Cutibacterium acnes (strain DSM 16379 / KPA171202) (Propionibacterium acnes).